The chain runs to 39 residues: Phospholipase A2 (39 aa).

Residue histidine 36 is part of the active site.

It belongs to the phospholipase A2 family. Group III subfamily. Ca(2+) serves as cofactor. Expressed by the venom gland.

It localises to the secreted. The enzyme catalyses a 1,2-diacyl-sn-glycero-3-phosphocholine + H2O = a 1-acyl-sn-glycero-3-phosphocholine + a fatty acid + H(+). In terms of biological role, PLA2 catalyzes the calcium-dependent hydrolysis of the 2-acyl groups in 3-sn-phosphoglycerides. The chain is Phospholipase A2 from Heloderma horridum horridum (Mexican beaded lizard).